Here is a 157-residue protein sequence, read N- to C-terminus: Protein E6 (157 aa).

2 zinc fingers span residues 41–77 (CNFC…CRVC) and 114–150 (CQTC…CRQC).

The protein belongs to the papillomaviridae E6 protein family. Forms homodimers. Interacts with ubiquitin-protein ligase UBE3A/E6-AP; this interaction stimulates UBE3A ubiquitin activity. Interacts with host BAK1.

The protein localises to the host cytoplasm. The protein resides in the host nucleus. In terms of biological role, plays a major role in the induction and maintenance of cellular transformation. E6 associates with host UBE3A/E6-AP ubiquitin-protein ligase and modulates its activity. Protects host keratinocytes from apoptosis by mediating the degradation of host BAK1. May also inhibit host immune response. The sequence is that of Protein E6 from Human papillomavirus type 5b.